The sequence spans 202 residues: Cytochrome c oxidase assembly protein CtaG (202 aa).

Over 1 to 14 (MTSPANPSEVTRDR) the chain is Cytoplasmic. Residues 15 to 37 (RNRGVAFVCAGVFVAMVGMSFAA) traverse the membrane as a helical; Signal-anchor for type II membrane protein segment. At 38 to 202 (VPLYRLFCQV…GAAKTQKLGG (165 aa)) the chain is on the periplasmic side.

The protein belongs to the COX11/CtaG family.

The protein resides in the cell inner membrane. Its function is as follows. Exerts its effect at some terminal stage of cytochrome c oxidase synthesis, probably by being involved in the insertion of the copper B into subunit I. The polypeptide is Cytochrome c oxidase assembly protein CtaG (Chelativorans sp. (strain BNC1)).